The chain runs to 252 residues: Urease accessory protein UreD (252 aa).

Belongs to the UreD family. UreD, UreF and UreG form a complex that acts as a GTP-hydrolysis-dependent molecular chaperone, activating the urease apoprotein by helping to assemble the nickel containing metallocenter of UreC. The UreE protein probably delivers the nickel.

It is found in the cytoplasm. Its function is as follows. Required for maturation of urease via the functional incorporation of the urease nickel metallocenter. This is Urease accessory protein UreD from Streptomyces avermitilis (strain ATCC 31267 / DSM 46492 / JCM 5070 / NBRC 14893 / NCIMB 12804 / NRRL 8165 / MA-4680).